Here is a 475-residue protein sequence, read N- to C-terminus: Cysteine--tRNA ligase (475 aa).

Zn(2+) is bound at residue Cys-28. The short motif at 30 to 40 (PTVYDETHIGH) is the 'HIGH' region element. The Zn(2+) site is built by Cys-208, His-233, and Glu-237. The short motif at 265-269 (KMSKS) is the 'KMSKS' region element. Lys-268 contacts ATP.

This sequence belongs to the class-I aminoacyl-tRNA synthetase family. The cofactor is Zn(2+).

It is found in the cytoplasm. It carries out the reaction tRNA(Cys) + L-cysteine + ATP = L-cysteinyl-tRNA(Cys) + AMP + diphosphate. This chain is Cysteine--tRNA ligase, found in Methanococcus vannielii (strain ATCC 35089 / DSM 1224 / JCM 13029 / OCM 148 / SB).